The sequence spans 475 residues: Ribulose bisphosphate carboxylase large chain (475 aa).

Residues 1-2 (MS) constitute a propeptide that is removed on maturation. The residue at position 3 (Pro-3) is an N-acetylproline. Lys-14 bears the N6,N6,N6-trimethyllysine mark. 2 residues coordinate substrate: Asn-123 and Thr-173. Residue Lys-175 is the Proton acceptor of the active site. Lys-177 is a substrate binding site. Mg(2+) is bound by residues Lys-201, Asp-203, and Glu-204. Lys-201 is modified (N6-carboxylysine). His-294 serves as the catalytic Proton acceptor. Positions 295, 327, and 379 each coordinate substrate.

The protein belongs to the RuBisCO large chain family. Type I subfamily. Heterohexadecamer of 8 large chains and 8 small chains; disulfide-linked. The disulfide link is formed within the large subunit homodimers. It depends on Mg(2+) as a cofactor. In terms of processing, the disulfide bond which can form in the large chain dimeric partners within the hexadecamer appears to be associated with oxidative stress and protein turnover.

It localises to the plastid. The protein resides in the chloroplast. The catalysed reaction is 2 (2R)-3-phosphoglycerate + 2 H(+) = D-ribulose 1,5-bisphosphate + CO2 + H2O. It carries out the reaction D-ribulose 1,5-bisphosphate + O2 = 2-phosphoglycolate + (2R)-3-phosphoglycerate + 2 H(+). Its function is as follows. RuBisCO catalyzes two reactions: the carboxylation of D-ribulose 1,5-bisphosphate, the primary event in carbon dioxide fixation, as well as the oxidative fragmentation of the pentose substrate in the photorespiration process. Both reactions occur simultaneously and in competition at the same active site. In Chara vulgaris (Common stonewort), this protein is Ribulose bisphosphate carboxylase large chain.